A 545-amino-acid polypeptide reads, in one-letter code: Chaperonin GroEL 1 (545 aa).

Residues 29–32, 86–90, G413, 477–479, and D493 contribute to the ATP site; these read TLGP, DGTTT, and NAA.

This sequence belongs to the chaperonin (HSP60) family. In terms of assembly, forms a cylinder of 14 subunits composed of two heptameric rings stacked back-to-back. Interacts with the co-chaperonin GroES.

It is found in the cytoplasm. The enzyme catalyses ATP + H2O + a folded polypeptide = ADP + phosphate + an unfolded polypeptide.. Functionally, together with its co-chaperonin GroES, plays an essential role in assisting protein folding. The GroEL-GroES system forms a nano-cage that allows encapsulation of the non-native substrate proteins and provides a physical environment optimized to promote and accelerate protein folding. The sequence is that of Chaperonin GroEL 1 from Arthrobacter sp. (strain FB24).